Consider the following 192-residue polypeptide: E3 ubiquitin-protein ligase RNF185 (192 aa).

The span at 1–14 shows a compositional bias: polar residues; the sequence is MASKGPSASASTEN. Positions 1–30 are disordered; sequence MASKGPSASASTENSSAGGPSGSSNGTGES. Over 1–130 the chain is Cytoplasmic; sequence MASKGPSASA…GGFQGFGFGD (130 aa). The segment covering 15–27 has biased composition (low complexity); sequence SSAGGPSGSSNGT. A required for ubiquitin ligase activity and protection against ER stress-induced cell death region spans residues 29 to 80; the sequence is ESGGQDSTFECNICLDTAKDAVISLCGHLFCWPCLHQWLETRPNRQVCPVCK. Residues 39-80 form an RING-type zinc finger; it reads CNICLDTAKDAVISLCGHLFCWPCLHQWLETRPNRQVCPVCK. The interval 90–123 is disordered; it reads PLYGRGSTGQQDPREKTPPRPQGQRPEPENRGGF. Residues 131-151 traverse the membrane as a helical segment; it reads GGFQMSFGIGAFPFGIFATAF. Residues 152–171 lie on the Mitochondrial intermembrane side of the membrane; that stretch reads NINDGRPPPAVPGTPQYVDE. The chain crosses the membrane as a helical span at residues 172 to 192; that stretch reads QFLSRLFLFVALVIMFWLLIA.

As to quaternary structure, interacts with ATG5 and BNIP1.

It localises to the mitochondrion outer membrane. The protein resides in the endoplasmic reticulum membrane. The enzyme catalyses S-ubiquitinyl-[E2 ubiquitin-conjugating enzyme]-L-cysteine + [acceptor protein]-L-lysine = [E2 ubiquitin-conjugating enzyme]-L-cysteine + N(6)-ubiquitinyl-[acceptor protein]-L-lysine.. It participates in protein modification; protein ubiquitination. Functionally, E3 ubiquitin-protein ligase that regulates selective mitochondrial autophagy by mediating 'Lys-63'-linked polyubiquitination of BNIP1. Acts in the endoplasmic reticulum (ER)-associated degradation (ERAD) pathway, which targets misfolded proteins that accumulate in the endoplasmic reticulum (ER) for ubiquitination and subsequent proteasome-mediated degradation. Protects cells from ER stress-induced apoptosis. Responsible for the cotranslational ubiquitination and degradation of CFTR in the ERAD pathway. Also acts as a regulator of the innate antiviral response by catalyzing 'Lys-27'-linked polyubiquitination of CGAS, thereby promoting CGAS cyclic GMP-AMP synthase activity. Preferentially associates with the E2 enzymes UBE2J1 and UBE2J2. This Rattus norvegicus (Rat) protein is E3 ubiquitin-protein ligase RNF185 (Rnf185).